Reading from the N-terminus, the 111-residue chain is Large ribosomal subunit protein uL23 (111 aa).

It belongs to the universal ribosomal protein uL23 family. As to quaternary structure, part of the 50S ribosomal subunit. Contacts protein L29, and trigger factor when it is bound to the ribosome.

Its function is as follows. One of the early assembly proteins it binds 23S rRNA. One of the proteins that surrounds the polypeptide exit tunnel on the outside of the ribosome. Forms the main docking site for trigger factor binding to the ribosome. The sequence is that of Large ribosomal subunit protein uL23 from Chlamydia trachomatis serovar A (strain ATCC VR-571B / DSM 19440 / HAR-13).